Reading from the N-terminus, the 450-residue chain is Tubulin alpha-3 chain (450 aa).

Q11 provides a ligand contact to GTP. K40 carries the post-translational modification N6-acetyllysine. Residues E71, G144, T145, T179, N206, and N228 each contribute to the GTP site. E71 contributes to the Mg(2+) binding site. Residue E254 is part of the active site.

The protein belongs to the tubulin family. Dimer of alpha and beta chains. A typical microtubule is a hollow water-filled tube with an outer diameter of 25 nm and an inner diameter of 15 nM. Alpha-beta heterodimers associate head-to-tail to form protofilaments running lengthwise along the microtubule wall with the beta-tubulin subunit facing the microtubule plus end conferring a structural polarity. Microtubules usually have 13 protofilaments but different protofilament numbers can be found in some organisms and specialized cells. Mg(2+) serves as cofactor. Undergoes a tyrosination/detyrosination cycle, the cyclic removal and re-addition of a C-terminal tyrosine residue by the enzymes tubulin tyrosine carboxypeptidase (TTCP) and tubulin tyrosine ligase (TTL), respectively. In terms of processing, acetylation of alpha chains at Lys-40 stabilizes microtubules and affects affinity and processivity of microtubule motors. This modification has a role in multiple cellular functions, ranging from cell motility, cell cycle progression or cell differentiation to intracellular trafficking and signaling.

The protein localises to the cytoplasm. It localises to the cytoskeleton. It carries out the reaction GTP + H2O = GDP + phosphate + H(+). In terms of biological role, tubulin is the major constituent of microtubules, a cylinder consisting of laterally associated linear protofilaments composed of alpha- and beta-tubulin heterodimers. Microtubules grow by the addition of GTP-tubulin dimers to the microtubule end, where a stabilizing cap forms. Below the cap, tubulin dimers are in GDP-bound state, owing to GTPase activity of alpha-tubulin. The sequence is that of Tubulin alpha-3 chain (TUBA3) from Zea mays (Maize).